Here is a 250-residue protein sequence, read N- to C-terminus: Probable syntaxin-8B (250 aa).

The Cytoplasmic segment spans residues 1 to 213 (MGDYWLNEHD…NRRMETIKQN (213 aa)). Residues 73 to 100 (EKELLRRKNKVESLISMKNQLNSTLDAA) are a coiled coil. The 63-residue stretch at 148–210 (QHIMREQDES…RNANRRMETI (63 aa)) folds into the t-SNARE coiled-coil homology domain. Residues 214-234 (AGSTCMIVCIVILIILIVVLI) traverse the membrane as a helical; Anchor for type IV membrane protein segment. Residues 235–250 (ATDSGCKIYNDPKHCP) lie on the Vesicular side of the membrane.

It belongs to the syntaxin family.

It localises to the membrane. This chain is Probable syntaxin-8B (syn8B), found in Dictyostelium discoideum (Social amoeba).